A 766-amino-acid chain; its full sequence is Discoidin domain-containing receptor A (766 aa).

Positions 1-18 (MQIALVLLAIYGTTTTNT) are cleaved as a signal peptide. At 19–372 (LRIDQCGENA…PPSSAATQQL (354 aa)) the chain is on the extracellular side. F5/8 type C domains lie at 24-180 (CGEN…IHGC) and 195-351 (SRLD…FTSA). Residues C24 and C180 are joined by a disulfide bond. N87, N103, N129, N242, N268, N311, and N353 each carry an N-linked (GlcNAc...) asparagine glycan. A helical transmembrane segment spans residues 373–393 (LVVCGIIFLTIFACVAYCVSV). The Cytoplasmic portion of the chain corresponds to 394–766 (CLKRRQKNKS…FERLVKPFQD (373 aa)). The disordered stretch occupies residues 475–501 (NFPPPPEGREEHTYSQPVSPENSSNGS). A compositionally biased stretch (polar residues) spans 488 to 501 (YSQPVSPENSSNGS). Positions 519–766 (LLIGKAIGEG…FERLVKPFQD (248 aa)) constitute a Protein kinase domain. ATP is bound by residues 525-533 (IGEGKFTMI) and K547.

This sequence belongs to the protein kinase superfamily. Tyr protein kinase family. Insulin receptor subfamily. In terms of tissue distribution, expressed in neurons in head and tail, some motoneurons in ventral nerve cord, in PVP interneurons, pharynx and stomato-intestinal muscle.

It localises to the cell membrane. The protein resides in the cell projection. The protein localises to the axon. Its subcellular location is the perikaryon. Functionally, receptor which, together with svh-4, is involved in axon guidance to establish the tracts for the ventral and dorsal nerve cords during nervous system development. May play a role in axon regeneration following injury in D-type motor neurons. In Caenorhabditis elegans, this protein is Discoidin domain-containing receptor A.